Here is a 283-residue protein sequence, read N- to C-terminus: Putative UTP--glucose-1-phosphate uridylyltransferase (283 aa).

Belongs to the UDPGP type 2 family.

It catalyses the reaction alpha-D-glucose 1-phosphate + UTP + H(+) = UDP-alpha-D-glucose + diphosphate. This is Putative UTP--glucose-1-phosphate uridylyltransferase from Methanocaldococcus jannaschii (strain ATCC 43067 / DSM 2661 / JAL-1 / JCM 10045 / NBRC 100440) (Methanococcus jannaschii).